The primary structure comprises 79 residues: Sulfur carrier protein TusA (79 aa).

Cys-17 serves as the catalytic Cysteine persulfide intermediate.

Belongs to the sulfur carrier protein TusA family.

The protein localises to the cytoplasm. Its function is as follows. Sulfur carrier protein which probably makes part of a sulfur-relay system. The polypeptide is Sulfur carrier protein TusA (Idiomarina loihiensis (strain ATCC BAA-735 / DSM 15497 / L2-TR)).